The following is a 147-amino-acid chain: Globin (147 aa).

Residues Gly-1–Gln-147 enclose the Globin domain. The heme b site is built by His-66 and His-98.

It belongs to the globin family. As to quaternary structure, homodimer.

The protein is Globin of Tritia mutabilis (Sea snail).